Consider the following 366-residue polypeptide: Cobalt-precorrin-5B C(1)-methyltransferase (366 aa).

Belongs to the CbiD family.

The enzyme catalyses Co-precorrin-5B + S-adenosyl-L-methionine = Co-precorrin-6A + S-adenosyl-L-homocysteine. It functions in the pathway cofactor biosynthesis; adenosylcobalamin biosynthesis; cob(II)yrinate a,c-diamide from sirohydrochlorin (anaerobic route): step 6/10. Catalyzes the methylation of C-1 in cobalt-precorrin-5B to form cobalt-precorrin-6A. This Thermoanaerobacter sp. (strain X514) protein is Cobalt-precorrin-5B C(1)-methyltransferase.